Consider the following 355-residue polypeptide: RGG repeats nuclear RNA binding protein A (355 aa).

Alanine 2 carries the N-acetylalanine modification. The disordered stretch occupies residues 26 to 225 (KIDKSKKSGQ…VEEKEPEDKE (200 aa)). Positions 37-47 (SSLPAKSAPKL) are enriched in low complexity. Composition is skewed to gly residues over residues 67-81 (RGGG…GRGG) and 114-141 (GGGA…SNEG). The Nuclear localization signal motif lies at 132 to 139 (GRRGGFSN). Basic and acidic residues predominate over residues 143-168 (DGERPRRAFERRSGTGRGSDFKRDGS). An Arginine-rich RNA-binding motif E-R-P-R-R-X-[F/Y]-[E/D]-R-R-S motif is present at residues 145–155 (ERPRRAFERRS). Residues 177–190 (GEEIAAETEAVAGV) show a composition bias toward low complexity. 2 stretches are compositionally biased toward basic and acidic residues: residues 191 to 202 (ETEKDVGEKPAV) and 209 to 225 (ANKE…EDKE). The FF domain occupies 234 to 289 (ILEEKKKALQSLTTSERKVDTKVFESMQQLSNKKSNDEIFIKLGSDKDKRKDDKEE). A Phosphoserine modification is found at serine 268. Residues 277-292 (GSDKDKRKDDKEEKAK) are compositionally biased toward basic and acidic residues. The segment at 277–355 (GSDKDKRKDD…AAQFPSLGGK (79 aa)) is disordered. Over residues 323–333 (GRGGVSSGESG) the composition is skewed to gly residues. Serine 351 is modified (phosphoserine).

It belongs to the SERBP1-HABP4 family. As to expression, expressed in seedlings, leaves, roots, inflorescences, and siliques. Constitutively expressed in seedlings and roots.

The protein localises to the cytoplasm. It is found in the perinuclear region. The protein resides in the nucleus. Functionally, ribosome-binding protein that acts as a regulator of mRNA translation by promoting ribosome inactivation. Binds RNA. Regulates responses to abscisic acid (ABA). Promotes stomata closure in drought conditions. Involved in resistance to salt and drought stresses via the accumulation of Pro. This chain is RGG repeats nuclear RNA binding protein A, found in Arabidopsis thaliana (Mouse-ear cress).